Here is a 69-residue protein sequence, read N- to C-terminus: Putative membrane protein insertion efficiency factor (69 aa).

The protein belongs to the UPF0161 family.

The protein resides in the cell membrane. Could be involved in insertion of integral membrane proteins into the membrane. The chain is Putative membrane protein insertion efficiency factor from Clostridium botulinum (strain ATCC 19397 / Type A).